The sequence spans 283 residues: Interferon alpha-inducible protein 27-like protein 2B (283 aa).

A mitochondrion-targeting transit peptide spans 1–90 (MKRKFVGAAI…AVGTATGARA (90 aa)). The segment at 90–120 (AEGSMGASREQESGPQDPPQELQEPQEPPSC) is disordered. The next 3 helical transmembrane spans lie at 130 to 150 (FVGAAIGGALAVAGAPIALSA), 176 to 196 (GGGIAAGGLVATLQSVGILGL), and 202 to 222 (IILGAVGAATGATAAGAMGAC). Residues 227-283 (PGLQDLQQEPKEPQEPQELQKQQEPQEPQELQKQQETQETQETQELQKTQEPPSYEK) form a disordered region. Residues 242–283 (PQELQKQQEPQEPQELQKQQETQETQETQELQKTQEPPSYEK) are compositionally biased toward low complexity.

The protein belongs to the IFI6/IFI27 family. In terms of assembly, homooligomer. Interacts with BAK1. Interacts with BAX. Interacts with adenine nucleotide translocase.

The protein localises to the mitochondrion inner membrane. Functions in the intrinsic apoptotic signaling pathway and may have an interferon-induced antiviral activity. In Mus musculus (Mouse), this protein is Interferon alpha-inducible protein 27-like protein 2B.